Here is a 293-residue protein sequence, read N- to C-terminus: tRNA pseudouridine synthase B (293 aa).

The active-site Nucleophile is Asp39.

Belongs to the pseudouridine synthase TruB family. Type 1 subfamily.

The catalysed reaction is uridine(55) in tRNA = pseudouridine(55) in tRNA. Its function is as follows. Responsible for synthesis of pseudouridine from uracil-55 in the psi GC loop of transfer RNAs. This chain is tRNA pseudouridine synthase B, found in Rickettsia bellii (strain RML369-C).